Here is a 192-residue protein sequence, read N- to C-terminus: Imidazoleglycerol-phosphate dehydratase (192 aa).

It belongs to the imidazoleglycerol-phosphate dehydratase family.

The protein resides in the cytoplasm. The catalysed reaction is D-erythro-1-(imidazol-4-yl)glycerol 3-phosphate = 3-(imidazol-4-yl)-2-oxopropyl phosphate + H2O. The protein operates within amino-acid biosynthesis; L-histidine biosynthesis; L-histidine from 5-phospho-alpha-D-ribose 1-diphosphate: step 6/9. In Staphylococcus aureus (strain bovine RF122 / ET3-1), this protein is Imidazoleglycerol-phosphate dehydratase.